Consider the following 1695-residue polypeptide: Sialoadhesin (1695 aa).

The first 19 residues, 1 to 19 (MCVLFSLLLLASVFSLGQT), serve as a signal peptide directing secretion. One can recognise an Ig-like V-type domain in the interval 20 to 136 (TWGVSSPKNV…DVKGTTVTVT (117 aa)). Residues 20-1639 (TWGVSSPKNV…ALHQLQLFQR (1620 aa)) lie on the Extracellular side of the membrane. Cystine bridges form between Cys36–Cys166, Cys41–Cys98, Cys160–Cys218, and Cys263–Cys306. N-acetylneuraminate is bound by residues Tyr63, Arg116, and 122 to 126 (SNRWL). 16 Ig-like C2-type domains span residues 153–235 (GMER…YLQV), 239–321 (PKGV…SPLS), 326–406 (MAEV…SPLS), 416–508 (PDLT…LDFY), 509–594 (ANVA…TVLT), 602–701 (PTFT…ASFN), 704–781 (ATVL…AQLS), 795–890 (PKLS…FQVR), 894–973 (VQVS…APVS), 980–1079 (PRHV…ADFD), 1081–1161 (QAVR…RPVT), 1172–1264 (RLTY…MNPS), 1245–1337 (KANT…ASLQ), 1342–1439 (PRDA…RLLT), 1442–1520 (DIRV…ATTS), and 1534–1627 (PTLI…AYFG). The N-linked (GlcNAc...) asparagine glycan is linked to Asn159. N-linked (GlcNAc...) asparagine glycans are attached at residues Asn266, Asn299, and Asn340. 2 disulfides stabilise this stretch: Cys347-Cys391 and Cys434-Cys492. An N-linked (GlcNAc...) asparagine glycan is attached at Asn500. An intrachain disulfide couples Cys532 to Cys576. A glycan (N-linked (GlcNAc...) asparagine) is linked at Asn583. A disulfide bridge links Cys625 with Cys685. Asn693, Asn722, and Asn737 each carry an N-linked (GlcNAc...) asparagine glycan. 2 cysteine pairs are disulfide-bonded: Cys725-Cys770 and Cys813-Cys872. Residues 827 to 829 (RGD) carry the Cell attachment site motif. Residue Asn882 is glycosylated (N-linked (GlcNAc...) asparagine). 2 cysteine pairs are disulfide-bonded: Cys912-Cys956 and Cys1001-Cys1063. N-linked (GlcNAc...) asparagine glycosylation is found at Asn1090 and Asn1100. 2 disulfide bridges follow: Cys1103–Cys1145 and Cys1189–Cys1237. N-linked (GlcNAc...) asparagine glycosylation occurs at Asn1247. 2 disulfide bridges follow: Cys1277/Cys1320 and Cys1363/Cys1422. Residues Asn1460 and Asn1474 are each glycosylated (N-linked (GlcNAc...) asparagine). Cystine bridges form between Cys1463–Cys1509 and Cys1552–Cys1611. The helical transmembrane segment at 1640 to 1660 (LLWVLGFLAGFLCLLLGLVAY) threads the bilayer. The Cytoplasmic portion of the chain corresponds to 1661 to 1695 (HTWRKKSSTKLNEDENSAEMATKKNTIQEEVVAAL).

The protein belongs to the immunoglobulin superfamily. SIGLEC (sialic acid binding Ig-like lectin) family. Interacts with CLEC10A. In terms of tissue distribution, detected in lymph node in the subcapsular sinus, interfollicular regions, and T and B-cell boundary (at protein level). Expressed by macrophages in various tissues. Highest expression in spleen and lymph node with lower amounts in lung, liver, bone marrow, heart and skin. No expression in thymus, kidney, brain or small intestine.

The protein resides in the cell membrane. It localises to the secreted. Macrophage-restricted adhesion molecule that mediates sialic-acid dependent binding to lymphocytes, including granulocytes, monocytes, natural killer cells, B-cells and CD8 T-cells. Plays a crucial role in limiting bacterial dissemination by engaging sialylated bacteria to promote effective phagocytosis and antigen presentation for the adaptive immune response. Mediates the uptake of various enveloped viruses via sialic acid recognition and subsequently induces the formation of intracellular compartments filled with virions (VCCs). In turn, enhances macrophage-to-T-cell transmission of several viruses including murine leukemia virus. Acts as an endocytic receptor mediating clathrin dependent endocytosis. Preferentially binds to alpha-2,3-linked sialic acid. Binds to SPN/CD43 on T-cells. May play a role in hemopoiesis. Plays a role in the inhibition of antiviral innate immune by promoting TBK1 degradation via TYROBP and TRIM27-mediated ubiquitination. This Mus musculus (Mouse) protein is Sialoadhesin (Siglec1).